The following is a 452-amino-acid chain: Phosphoglucosamine mutase (452 aa).

Residue Ser98 is the Phosphoserine intermediate of the active site. Residues Ser98, Asp239, Asp241, and Asp243 each contribute to the Mg(2+) site. Ser98 carries the post-translational modification Phosphoserine.

Belongs to the phosphohexose mutase family. Mg(2+) serves as cofactor. In terms of processing, activated by phosphorylation.

It carries out the reaction alpha-D-glucosamine 1-phosphate = D-glucosamine 6-phosphate. Its function is as follows. Catalyzes the conversion of glucosamine-6-phosphate to glucosamine-1-phosphate. The protein is Phosphoglucosamine mutase of Anaplasma marginale (strain St. Maries).